The following is a 132-amino-acid chain: Sec-independent protein translocase protein TatB (132 aa).

A helical membrane pass occupies residues 1 to 21 (MFDIGFWELVLISVVGLVVLG). The tract at residues 70–132 (GMEDLSPELK…KVSAADKKAE (63 aa)) is disordered. Basic and acidic residues-rich tracts occupy residues 96-108 (YADKAQSETETAK) and 115-132 (SAEKVEEIKVSAADKKAE).

It belongs to the TatB family. As to quaternary structure, the Tat system comprises two distinct complexes: a TatABC complex, containing multiple copies of TatA, TatB and TatC subunits, and a separate TatA complex, containing only TatA subunits. Substrates initially bind to the TatABC complex, which probably triggers association of the separate TatA complex to form the active translocon.

The protein resides in the cell inner membrane. Part of the twin-arginine translocation (Tat) system that transports large folded proteins containing a characteristic twin-arginine motif in their signal peptide across membranes. Together with TatC, TatB is part of a receptor directly interacting with Tat signal peptides. TatB may form an oligomeric binding site that transiently accommodates folded Tat precursor proteins before their translocation. The protein is Sec-independent protein translocase protein TatB of Vibrio parahaemolyticus serotype O3:K6 (strain RIMD 2210633).